Reading from the N-terminus, the 332-residue chain is Adenosine deaminase (332 aa).

Zn(2+) contacts are provided by histidine 12 and histidine 14. Residues histidine 14, aspartate 16, and glycine 169 each contribute to the substrate site. Histidine 196 is a binding site for Zn(2+). Glutamate 199 serves as the catalytic Proton donor. A Zn(2+)-binding site is contributed by aspartate 277.

It belongs to the metallo-dependent hydrolases superfamily. Adenosine and AMP deaminases family. Adenosine deaminase subfamily. The cofactor is Zn(2+).

The catalysed reaction is adenosine + H2O + H(+) = inosine + NH4(+). It catalyses the reaction 2'-deoxyadenosine + H2O + H(+) = 2'-deoxyinosine + NH4(+). Functionally, catalyzes the hydrolytic deamination of adenosine and 2-deoxyadenosine. The sequence is that of Adenosine deaminase from Vibrio atlanticus (strain LGP32) (Vibrio splendidus (strain Mel32)).